Consider the following 212-residue polypeptide: Proteasome subunit beta type-2 (212 aa).

This sequence belongs to the peptidase T1B family. In terms of assembly, the 26S proteasome consists of a 20S proteasome core and two 19S regulatory subunits. The 20S proteasome core is composed of 28 subunits that are arranged in four stacked rings, resulting in a barrel-shaped structure. The two end rings are each formed by seven alpha subunits, and the two central rings are each formed by seven beta subunits. The catalytic chamber with the active sites is on the inside of the barrel.

The protein localises to the cytoplasm. It is found in the nucleus. Non-catalytic component of the proteasome, a multicatalytic proteinase complex which is characterized by its ability to cleave peptides with Arg, Phe, Tyr, Leu, and Glu adjacent to the leaving group at neutral or slightly basic pH. The proteasome has an ATP-dependent proteolytic activity. The protein is Proteasome subunit beta type-2 (PBD1) of Oryza sativa subsp. japonica (Rice).